The following is a 437-amino-acid chain: Glutamate-1-semialdehyde 2,1-aminomutase (437 aa).

K273 is subject to N6-(pyridoxal phosphate)lysine.

The protein belongs to the class-III pyridoxal-phosphate-dependent aminotransferase family. HemL subfamily. In terms of assembly, homodimer. Requires pyridoxal 5'-phosphate as cofactor.

It is found in the cytoplasm. It carries out the reaction (S)-4-amino-5-oxopentanoate = 5-aminolevulinate. Its pathway is porphyrin-containing compound metabolism; protoporphyrin-IX biosynthesis; 5-aminolevulinate from L-glutamyl-tRNA(Glu): step 2/2. The chain is Glutamate-1-semialdehyde 2,1-aminomutase from Chlamydia caviae (strain ATCC VR-813 / DSM 19441 / 03DC25 / GPIC) (Chlamydophila caviae).